Here is a 398-residue protein sequence, read N- to C-terminus: RNA-binding protein rnc1 (398 aa).

Residues 40–78 (KVSIPTPKPSTPLSTLTNGSTIQQSMTNQPEPTSQVPPI) are disordered. Thr-50 bears the Phosphothreonine mark. The span at 57 to 76 (NGSTIQQSMTNQPEPTSQVP) shows a compositional bias: polar residues. 2 consecutive KH domains span residues 93–157 (QLTL…YRFI) and 178–243 (PRKL…IWEI). The span at 274 to 290 (ASTASPQQVSPPAAPST) shows a compositional bias: low complexity. Residues 274 to 295 (ASTASPQQVSPPAAPSTTSGEA) are disordered. The region spanning 320 to 385 (KVTQNISIPA…EENEKALFLL (66 aa)) is the KH 3 domain.

Post-translationally, phosphorylated by pmk1. Phosphorylation causes enhancement of the RNA-binding activity.

The protein resides in the cytoplasm. In terms of biological role, binds and stabilizes pmp1 mRNA and hence acts as a negative regulator of pmk1 signaling. Overexpression suppresses the Cl(-) sensitivity of calcineurin deletion. This is RNA-binding protein rnc1 from Schizosaccharomyces pombe (strain 972 / ATCC 24843) (Fission yeast).